Consider the following 1527-residue polypeptide: DNA (cytosine-5)-methyltransferase 1A (1527 aa).

2 disordered regions span residues 1 to 62 (MAKS…PKRA) and 661 to 718 (GDTK…KEIK). 2 stretches are compositionally biased toward acidic residues: residues 25 to 36 (EPVENENLESEF) and 664 to 692 (KEEDQNEPKEIDDDQEENEDNDAEEEVNV). Basic and acidic residues predominate over residues 709–718 (SSADTRKEIK). BAH domains follow at residues 742–874 (LSIS…FSLP) and 910–1049 (ITYN…KQLP). In terms of domain architecture, SAM-dependent MTase C5-type spans 1092–1526 (LATLDIFAGC…RKLKQAIDAK (435 aa)). C1197 is an active-site residue.

It belongs to the class I-like SAM-binding methyltransferase superfamily. C5-methyltransferase family. In terms of tissue distribution, expressed in roots and inflorescences. Expressed in roots, panicles, anthers, pistils, endosperm and imbibed embryos. Expressed in tissues containing actively replicating and dividing cells, such as shoot and root meristems.

The protein resides in the nucleus. The catalysed reaction is a 2'-deoxycytidine in DNA + S-adenosyl-L-methionine = a 5-methyl-2'-deoxycytidine in DNA + S-adenosyl-L-homocysteine + H(+). In terms of biological role, probably methylates CpG residues and maintains DNA methylation. May be involved in methylation-dependent gene silencing. May play a minor role in the maintenance of DNA methylation. The polypeptide is DNA (cytosine-5)-methyltransferase 1A (Oryza sativa subsp. japonica (Rice)).